The following is a 64-amino-acid chain: Large ribosomal subunit protein bL35 (64 aa).

The disordered stretch occupies residues 1 to 25 (MPKMKTHRGAAKRLKKTGTGKLKRA).

This sequence belongs to the bacterial ribosomal protein bL35 family.

This chain is Large ribosomal subunit protein bL35, found in Clostridioides difficile (strain 630) (Peptoclostridium difficile).